Here is a 272-residue protein sequence, read N- to C-terminus: Acyl-[acyl-carrier-protein]--UDP-N-acetylglucosamine O-acyltransferase (272 aa).

It belongs to the transferase hexapeptide repeat family. LpxA subfamily. Homotrimer.

It is found in the cytoplasm. It carries out the reaction a (3R)-hydroxyacyl-[ACP] + UDP-N-acetyl-alpha-D-glucosamine = a UDP-3-O-[(3R)-3-hydroxyacyl]-N-acetyl-alpha-D-glucosamine + holo-[ACP]. It participates in glycolipid biosynthesis; lipid IV(A) biosynthesis; lipid IV(A) from (3R)-3-hydroxytetradecanoyl-[acyl-carrier-protein] and UDP-N-acetyl-alpha-D-glucosamine: step 1/6. In terms of biological role, involved in the biosynthesis of lipid A, a phosphorylated glycolipid that anchors the lipopolysaccharide to the outer membrane of the cell. In Methylobacterium radiotolerans (strain ATCC 27329 / DSM 1819 / JCM 2831 / NBRC 15690 / NCIMB 10815 / 0-1), this protein is Acyl-[acyl-carrier-protein]--UDP-N-acetylglucosamine O-acyltransferase.